The sequence spans 454 residues: Bifunctional protein GlmU (454 aa).

The tract at residues 1-228 is pyrophosphorylase; the sequence is MTLPLHVVIL…PQDVEGANDP (228 aa). Residues 10–13, lysine 24, glutamine 76, 81–82, 103–105, glycine 138, glutamate 153, asparagine 168, and asparagine 226 contribute to the UDP-N-acetyl-alpha-D-glucosamine site; these read LAAG, GT, and YGD. Mg(2+) is bound at residue aspartate 105. A Mg(2+)-binding site is contributed by asparagine 226. The tract at residues 229–249 is linker; sequence WQLAQLERAWQLRAARALSLQ. The interval 250–454 is N-acetyltransferase; it reads GVRMADPARV…IEGWERPTKK (205 aa). Residues arginine 332 and lysine 350 each contribute to the UDP-N-acetyl-alpha-D-glucosamine site. Catalysis depends on histidine 362, which acts as the Proton acceptor. 2 residues coordinate UDP-N-acetyl-alpha-D-glucosamine: tyrosine 365 and asparagine 376. Residues alanine 379, 385-386, serine 404, alanine 422, and arginine 439 contribute to the acetyl-CoA site; that span reads NY.

The protein in the N-terminal section; belongs to the N-acetylglucosamine-1-phosphate uridyltransferase family. In the C-terminal section; belongs to the transferase hexapeptide repeat family. In terms of assembly, homotrimer. Requires Mg(2+) as cofactor.

It is found in the cytoplasm. The catalysed reaction is alpha-D-glucosamine 1-phosphate + acetyl-CoA = N-acetyl-alpha-D-glucosamine 1-phosphate + CoA + H(+). It catalyses the reaction N-acetyl-alpha-D-glucosamine 1-phosphate + UTP + H(+) = UDP-N-acetyl-alpha-D-glucosamine + diphosphate. It participates in nucleotide-sugar biosynthesis; UDP-N-acetyl-alpha-D-glucosamine biosynthesis; N-acetyl-alpha-D-glucosamine 1-phosphate from alpha-D-glucosamine 6-phosphate (route II): step 2/2. It functions in the pathway nucleotide-sugar biosynthesis; UDP-N-acetyl-alpha-D-glucosamine biosynthesis; UDP-N-acetyl-alpha-D-glucosamine from N-acetyl-alpha-D-glucosamine 1-phosphate: step 1/1. The protein operates within bacterial outer membrane biogenesis; LPS lipid A biosynthesis. In terms of biological role, catalyzes the last two sequential reactions in the de novo biosynthetic pathway for UDP-N-acetylglucosamine (UDP-GlcNAc). The C-terminal domain catalyzes the transfer of acetyl group from acetyl coenzyme A to glucosamine-1-phosphate (GlcN-1-P) to produce N-acetylglucosamine-1-phosphate (GlcNAc-1-P), which is converted into UDP-GlcNAc by the transfer of uridine 5-monophosphate (from uridine 5-triphosphate), a reaction catalyzed by the N-terminal domain. The chain is Bifunctional protein GlmU from Xanthomonas oryzae pv. oryzae (strain MAFF 311018).